We begin with the raw amino-acid sequence, 77 residues long: ATP synthase subunit c (77 aa).

The next 2 helical transmembrane spans lie at 10–30 (IAVA…FGNM) and 57–77 (GLID…LFVL).

Belongs to the ATPase C chain family. F-type ATPases have 2 components, F(1) - the catalytic core - and F(0) - the membrane proton channel. F(1) has five subunits: alpha(3), beta(3), gamma(1), delta(1), epsilon(1). F(0) has three main subunits: a(1), b(2) and c(10-14). The alpha and beta chains form an alternating ring which encloses part of the gamma chain. F(1) is attached to F(0) by a central stalk formed by the gamma and epsilon chains, while a peripheral stalk is formed by the delta and b chains.

It is found in the cell inner membrane. In terms of biological role, f(1)F(0) ATP synthase produces ATP from ADP in the presence of a proton or sodium gradient. F-type ATPases consist of two structural domains, F(1) containing the extramembraneous catalytic core and F(0) containing the membrane proton channel, linked together by a central stalk and a peripheral stalk. During catalysis, ATP synthesis in the catalytic domain of F(1) is coupled via a rotary mechanism of the central stalk subunits to proton translocation. Key component of the F(0) channel; it plays a direct role in translocation across the membrane. A homomeric c-ring of between 10-14 subunits forms the central stalk rotor element with the F(1) delta and epsilon subunits. The polypeptide is ATP synthase subunit c (Pseudoalteromonas translucida (strain TAC 125)).